The sequence spans 336 residues: Adenosine deaminase (336 aa).

Positions 15 and 17 each coordinate Zn(2+). Positions 17, 19, and 172 each coordinate substrate. Histidine 199 is a Zn(2+) binding site. Residue glutamate 202 is the Proton donor of the active site. Position 279 (aspartate 279) interacts with Zn(2+).

Belongs to the metallo-dependent hydrolases superfamily. Adenosine and AMP deaminases family. Adenosine deaminase subfamily. The cofactor is Zn(2+).

The enzyme catalyses adenosine + H2O + H(+) = inosine + NH4(+). It carries out the reaction 2'-deoxyadenosine + H2O + H(+) = 2'-deoxyinosine + NH4(+). In terms of biological role, catalyzes the hydrolytic deamination of adenosine and 2-deoxyadenosine. This chain is Adenosine deaminase, found in Streptococcus thermophilus (strain ATCC BAA-491 / LMD-9).